Consider the following 313-residue polypeptide: uncharacterized protein (313 aa).

6 helical membrane-spanning segments follow: residues 16-36, 106-126, 155-175, 208-228, 233-253, and 286-306; these read AGTW…AFLA, FTIL…ANEF, FGLL…LIFF, LSES…SAVF, LAVG…AFIA, and FSLV…FGIF.

The protein resides in the cell membrane. This is an uncharacterized protein from Bacillus subtilis (strain 168).